Reading from the N-terminus, the 321-residue chain is Beta-ketoacyl-[acyl-carrier-protein] synthase III (321 aa).

Active-site residues include Cys-115 and His-248. The ACP-binding stretch occupies residues 249–253 (QANIR). Asn-278 is a catalytic residue.

The protein belongs to the thiolase-like superfamily. FabH family. As to quaternary structure, homodimer.

The protein localises to the cytoplasm. It catalyses the reaction malonyl-[ACP] + acetyl-CoA + H(+) = 3-oxobutanoyl-[ACP] + CO2 + CoA. The protein operates within lipid metabolism; fatty acid biosynthesis. In terms of biological role, catalyzes the condensation reaction of fatty acid synthesis by the addition to an acyl acceptor of two carbons from malonyl-ACP. Catalyzes the first condensation reaction which initiates fatty acid synthesis and may therefore play a role in governing the total rate of fatty acid production. Possesses both acetoacetyl-ACP synthase and acetyl transacylase activities. Its substrate specificity determines the biosynthesis of branched-chain and/or straight-chain of fatty acids. In Aromatoleum aromaticum (strain DSM 19018 / LMG 30748 / EbN1) (Azoarcus sp. (strain EbN1)), this protein is Beta-ketoacyl-[acyl-carrier-protein] synthase III.